The following is a 445-amino-acid chain: Phosphoglucosamine mutase (445 aa).

Catalysis depends on S102, which acts as the Phosphoserine intermediate. Residues S102, D241, D243, and D245 each coordinate Mg(2+). S102 is subject to Phosphoserine.

Belongs to the phosphohexose mutase family. Mg(2+) serves as cofactor. In terms of processing, activated by phosphorylation.

The enzyme catalyses alpha-D-glucosamine 1-phosphate = D-glucosamine 6-phosphate. Functionally, catalyzes the conversion of glucosamine-6-phosphate to glucosamine-1-phosphate. The sequence is that of Phosphoglucosamine mutase from Aliivibrio salmonicida (strain LFI1238) (Vibrio salmonicida (strain LFI1238)).